The following is a 140-amino-acid chain: Protein NrdI (140 aa).

It belongs to the NrdI family.

Probably involved in ribonucleotide reductase function. This Ruegeria sp. (strain TM1040) (Silicibacter sp.) protein is Protein NrdI.